We begin with the raw amino-acid sequence, 150 residues long: MIDLTLQRASTSAVPDSAAFRLWAEAALEKPHAEVVIRIVDREESAALNSTYRGKTGPTNVLSFPFVVPEGVPNDLLGDLVICAPVVEREAAEQGKPVEAHWAHMVVHGMLHLQGYDHIEEAEAEIMENREIAILRGLGMENPYREIRPE.

Residues His-108, His-112, and His-118 each coordinate Zn(2+).

It belongs to the endoribonuclease YbeY family. It depends on Zn(2+) as a cofactor.

It localises to the cytoplasm. Functionally, single strand-specific metallo-endoribonuclease involved in late-stage 70S ribosome quality control and in maturation of the 3' terminus of the 16S rRNA. This chain is Endoribonuclease YbeY, found in Methylococcus capsulatus (strain ATCC 33009 / NCIMB 11132 / Bath).